Here is a 263-residue protein sequence, read N- to C-terminus: Ribonuclease HII (263 aa).

The region spanning 74 to 262 (EHVAGLDEVG…VQETAATRQT (189 aa)) is the RNase H type-2 domain. The a divalent metal cation site is built by Asp80, Glu81, and Asp172.

The protein belongs to the RNase HII family. Mn(2+) is required as a cofactor. Requires Mg(2+) as cofactor.

The protein localises to the cytoplasm. It catalyses the reaction Endonucleolytic cleavage to 5'-phosphomonoester.. Functionally, endonuclease that specifically degrades the RNA of RNA-DNA hybrids. The chain is Ribonuclease HII (rnhB) from Halalkalibacterium halodurans (strain ATCC BAA-125 / DSM 18197 / FERM 7344 / JCM 9153 / C-125) (Bacillus halodurans).